Reading from the N-terminus, the 441-residue chain is 3-oxo-glucose-6-phosphate:glutamate aminotransferase (441 aa).

Thr98–Ser99 serves as a coordination point for substrate. Gly125 to Thr126 is a binding site for pyridoxal 5'-phosphate. Residue Phe151 participates in substrate binding. Pyridoxal 5'-phosphate-binding residues include Gln225 and Ser242. Asn244 to Tyr246 is a substrate binding site. Position 247 is an N6-(pyridoxal phosphate)lysine (Lys247). Substrate contacts are provided by Tyr274 and Lys282. Asn292 provides a ligand contact to pyridoxal 5'-phosphate. Tyr379 contributes to the substrate binding site.

Belongs to the DegT/DnrJ/EryC1 family. Homodimer. The cofactor is pyridoxal 5'-phosphate.

It catalyses the reaction 3-dehydro-D-glucose 6-phosphate + L-glutamate = D-kanosamine 6-phosphate + 2-oxoglutarate. Its pathway is antibiotic biosynthesis; kanosamine biosynthesis. Involved in the biosynthesis of kanosamine (3-amino-3-deoxy-D-glucose), which is known to have antibiotic and antifungal properties, and to be a precursor of the antibiotic neotrehalosadiamine (3,3'-diamino-3,3'-dideoxy-alpha,beta-trehalose (NTD)). Catalyzes the reversible pyridoxal phosphate-dependent transamination of 3-dehydro-alpha-D-glucose 6-phosphate to form alpha-D-kanosamine-6-phosphate. It can only use alpha-anomer and glutamate is the only amino donor. This is 3-oxo-glucose-6-phosphate:glutamate aminotransferase (ntdA) from Bacillus subtilis (strain 168).